Consider the following 500-residue polypeptide: Cytochrome P450 2D26 (500 aa).

Ser-249 is modified (phosphoserine). Residue Cys-446 participates in heme binding.

The protein belongs to the cytochrome P450 family. The cofactor is heme.

The protein resides in the endoplasmic reticulum membrane. The protein localises to the microsome membrane. The enzyme catalyses an organic molecule + reduced [NADPH--hemoprotein reductase] + O2 = an alcohol + oxidized [NADPH--hemoprotein reductase] + H2O + H(+). In terms of biological role, cytochromes P450 are a group of heme-thiolate monooxygenases. In liver microsomes, this enzyme is involved in an NADPH-dependent electron transport pathway. It oxidizes a variety of structurally unrelated compounds, including steroids, fatty acids, and xenobiotics. The polypeptide is Cytochrome P450 2D26 (Mus musculus (Mouse)).